Here is a 383-residue protein sequence, read N- to C-terminus: Putative glutamate--cysteine ligase 2-2 (383 aa).

The protein belongs to the glutamate--cysteine ligase type 2 family. YbdK subfamily.

The catalysed reaction is L-cysteine + L-glutamate + ATP = gamma-L-glutamyl-L-cysteine + ADP + phosphate + H(+). ATP-dependent carboxylate-amine ligase which exhibits weak glutamate--cysteine ligase activity. This is Putative glutamate--cysteine ligase 2-2 from Legionella pneumophila (strain Paris).